We begin with the raw amino-acid sequence, 409 residues long: Autotransproter heptosyltransferase BAHTCr (409 aa).

3 residues coordinate ADP-D-glycero-beta-D-manno-heptose: threonine 107, leucine 108, and glycine 109. Aspartate 110 serves as the catalytic Proton acceptor. Residues glutamine 224, threonine 226, lysine 230, arginine 257, glycine 302, and glutamate 326 each coordinate ADP-D-glycero-beta-D-manno-heptose. Residues cysteine 339, cysteine 342, cysteine 358, and cysteine 370 each contribute to the Fe(3+) site.

Belongs to the glycosyltransferase 9 family. In terms of assembly, homododecamer composed of 6 homodimers forming a ring. Fe(3+) serves as cofactor.

It localises to the cytoplasm. The enzyme catalyses ADP-D-glycero-beta-D-manno-heptose + L-seryl-[protein] = O-(D-glycero-alpha-D-manno-heptosyl)-L-seryl-[protein] + ADP + H(+). It carries out the reaction ADP-L-glycero-beta-D-manno-heptose + L-seryl-[protein] = O-(L-glycero-alpha-D-manno-heptosyl)-L-seryl-[protein] + ADP + H(+). Glycosylates autotransporter CARC. By glycosylating CARC, involved in the colonization of the mouse host gastrointestinal tract. In Citrobacter rodentium (strain ICC168) (Citrobacter freundii biotype 4280), this protein is Autotransproter heptosyltransferase BAHTCr.